Consider the following 134-residue polypeptide: Small ribosomal subunit protein uS8c (134 aa).

Belongs to the universal ribosomal protein uS8 family. As to quaternary structure, part of the 30S ribosomal subunit.

The protein localises to the plastid. Its subcellular location is the chloroplast. In terms of biological role, one of the primary rRNA binding proteins, it binds directly to 16S rRNA central domain where it helps coordinate assembly of the platform of the 30S subunit. This chain is Small ribosomal subunit protein uS8c (rps8), found in Panax ginseng (Korean ginseng).